A 489-amino-acid polypeptide reads, in one-letter code: Betaine aldehyde dehydrogenase (489 aa).

K(+) is bound by residues T26 and D93. Residue 150–152 (GAW) coordinates NAD(+). The Charge relay system role is filled by K162. NAD(+) is bound at residue 176-179 (KPSE). Residue V180 coordinates K(+). 229-232 (GVET) contacts NAD(+). L245 lines the K(+) pocket. Residue E251 is the Proton acceptor of the active site. The NAD(+) site is built by G253, C285, and E386. The active-site Nucleophile is the C285. Residue C285 is modified to Cysteine sulfenic acid (-SOH). The K(+) site is built by K456 and G459. E463 acts as the Charge relay system in catalysis.

Belongs to the aldehyde dehydrogenase family. Dimer of dimers. K(+) is required as a cofactor.

The catalysed reaction is betaine aldehyde + NAD(+) + H2O = glycine betaine + NADH + 2 H(+). Its pathway is amine and polyamine biosynthesis; betaine biosynthesis via choline pathway; betaine from betaine aldehyde: step 1/1. Its function is as follows. Involved in the biosynthesis of the osmoprotectant glycine betaine. Catalyzes the irreversible oxidation of betaine aldehyde to the corresponding acid. This is Betaine aldehyde dehydrogenase from Burkholderia orbicola (strain MC0-3).